We begin with the raw amino-acid sequence, 351 residues long: Major capsid protein (351 aa).

The protein belongs to the lambda phage major capsid protein family. Homomultimer.

The protein localises to the virion. Its subcellular location is the host cytoplasm. In terms of biological role, assembles to form an icosahedral capsid. The assembly is primed by the interaction between capsid assembly protease and portal dodecamer, and major capsid proteins assemble cooperatively to form the procapsid with the help of capsid scaffolding protein. Major capsid protein forms hexons and pentons of the icosahedron. Viral genomic DNA is packaged into the procapsid through the portal vertex. The packaging triggers a dramatic reconfiguration of the capsid shell. The polypeptide is Major capsid protein (Pseudomonas phage KPP10 (Bacteriophage KPP10)).